Here is a 31-residue protein sequence, read N- to C-terminus: MEALVYTFLLVGTLGIIFFAIFFREPPRIVK.

A helical membrane pass occupies residues 3–23 (ALVYTFLLVGTLGIIFFAIFF).

Belongs to the PsbT family. PSII is composed of 1 copy each of membrane proteins PsbA, PsbB, PsbC, PsbD, PsbE, PsbF, PsbH, PsbI, PsbJ, PsbK, PsbL, PsbM, PsbT, PsbY, PsbZ, Psb30/Ycf12, at least 3 peripheral proteins of the oxygen-evolving complex and a large number of cofactors. It forms dimeric complexes.

It localises to the plastid. The protein localises to the chloroplast thylakoid membrane. In terms of biological role, found at the monomer-monomer interface of the photosystem II (PS II) dimer, plays a role in assembly and dimerization of PSII. PSII is a light-driven water plastoquinone oxidoreductase, using light energy to abstract electrons from H(2)O, generating a proton gradient subsequently used for ATP formation. The polypeptide is Photosystem II reaction center protein T (Chlorella vulgaris (Green alga)).